An 89-amino-acid chain; its full sequence is Small ribosomal subunit protein uS19 (89 aa).

The protein belongs to the universal ribosomal protein uS19 family.

Its function is as follows. Protein S19 forms a complex with S13 that binds strongly to the 16S ribosomal RNA. This chain is Small ribosomal subunit protein uS19, found in Parabacteroides distasonis (strain ATCC 8503 / DSM 20701 / CIP 104284 / JCM 5825 / NCTC 11152).